Reading from the N-terminus, the 598-residue chain is MHPYRTHDCSALREENAGQVVRLSGWVHSKRDHGGLLFIDLRDHYGVTQIVIPAGTDLLEKAERLRVESVITVTGKVVVRHGSQRNPNLPTGDVEVLADALEVRSSAEVLPFQVAGNENYPEDLRLKYRYIDLRRDKMHQNIMLRSKVITSLRQRMIEQGFTEFQTPILTASSPEGARDFLVPARLHPGKFYALPQAPQQFKQLAMVAGFDRYFQIAPCFRDEASRADRSPGEFYQLDFEMSFVTQEDVFTVLEPVLAGVFNEFTPEGWKITDGAFPRIPYADAMRDYGSDKPDLRNPLIIKDVTDAFRDSGFGLFAKIAASGGQIRAIPAPGAGDRPRGFFDKLNSWARENGAGGLGYIIFGEEGGKGPIVKNLEADRVESIREICGLKAGDAVFFAAGKGDEVAKFSGVVRTKVATELDLIEKNAFRFCWVVDFPMYELNEETGKVDFSHNPFSMPQGGLEALNTQDPLTINAYQYDIVCNGVELSSGAIRNHLPDVMLRAFEIAGYGPEVVEERFGGMLNAFRYGAPPHGGAAPGVDRIVMLLADEPNIREVILFPLNQSGEDLMMEAPAPVEPARLKELHLALDLPKPKPTASK.

An L-aspartate-binding site is contributed by Glu175. The interval 199–202 (QQFK) is aspartate. L-aspartate-binding residues include Arg221 and His452. An ATP-binding site is contributed by 221-223 (RDE). An ATP-binding site is contributed by Glu486. Arg493 is an L-aspartate binding site. 538 to 541 (GVDR) contacts ATP.

This sequence belongs to the class-II aminoacyl-tRNA synthetase family. Type 1 subfamily. In terms of assembly, homodimer.

The protein resides in the cytoplasm. The catalysed reaction is tRNA(Asx) + L-aspartate + ATP = L-aspartyl-tRNA(Asx) + AMP + diphosphate. Aspartyl-tRNA synthetase with relaxed tRNA specificity since it is able to aspartylate not only its cognate tRNA(Asp) but also tRNA(Asn). Reaction proceeds in two steps: L-aspartate is first activated by ATP to form Asp-AMP and then transferred to the acceptor end of tRNA(Asp/Asn). This is Aspartate--tRNA(Asp/Asn) ligase from Gluconobacter oxydans (strain 621H) (Gluconobacter suboxydans).